The sequence spans 238 residues: ATP synthase subunit a (238 aa).

7 consecutive transmembrane segments (helical) span residues 35 to 55 (SNVI…TLAT), 61 to 81 (VPSG…SFVV), 94 to 114 (FLCA…VPGL), 128 to 148 (ALTV…AGYI), 151 to 171 (FMGP…ISHL), 190 to 210 (IVLV…MYFL), and 211 to 231 (FSLA…IYLK).

The protein belongs to the ATPase A chain family. In terms of assembly, F-type ATPases have 2 components, CF(1) - the catalytic core - and CF(0) - the membrane proton channel. CF(1) has five subunits: alpha(3), beta(3), gamma(1), delta(1), epsilon(1). CF(0) has three main subunits: a(1), b(2) and c(9-12). The alpha and beta chains form an alternating ring which encloses part of the gamma chain. CF(1) is attached to CF(0) by a central stalk formed by the gamma and epsilon chains, while a peripheral stalk is formed by the delta and b chains.

Its subcellular location is the cell inner membrane. Key component of the proton channel; it plays a direct role in the translocation of protons across the membrane. This chain is ATP synthase subunit a, found in Solidesulfovibrio magneticus (strain ATCC 700980 / DSM 13731 / RS-1) (Desulfovibrio magneticus).